A 206-amino-acid polypeptide reads, in one-letter code: Large ribosomal subunit protein uL13z (206 aa).

It belongs to the universal ribosomal protein uL13 family.

This Arabidopsis thaliana (Mouse-ear cress) protein is Large ribosomal subunit protein uL13z (RPL13AA).